The chain runs to 724 residues: Membrane protein YdfJ (724 aa).

The next 12 membrane-spanning stretches (helical) occupy residues 17 to 37, 179 to 199, 200 to 220, 231 to 251, 277 to 297, 309 to 329, 360 to 380, 512 to 532, 539 to 559, 575 to 595, 627 to 647, and 655 to 675; these read IKAI…AVTL, IVGI…LLIA, GLPI…VLIG, LSLA…FIFT, AVVF…VVNI, LSVL…LSIA, IMLS…SMHL, AIPV…TIVF, LVAV…CVFV, GPIL…LAMD, PVVT…IFAG, and GLAL…TLIP.

This sequence belongs to the resistance-nodulation-cell division (RND) (TC 2.A.6) family. MmpL subfamily.

Its subcellular location is the cell membrane. This is Membrane protein YdfJ (ydfJ) from Bacillus subtilis (strain 168).